We begin with the raw amino-acid sequence, 151 residues long: UPF0208 membrane protein YfbV (151 aa).

The next 2 helical transmembrane spans lie at 46 to 65 (YAIRFMPPVAVFTLCWQIAL) and 69 to 91 (LGPAVATALFALSLPMQGLWWLG).

This sequence belongs to the UPF0208 family.

It localises to the cell inner membrane. In Salmonella choleraesuis (strain SC-B67), this protein is UPF0208 membrane protein YfbV.